A 122-amino-acid polypeptide reads, in one-letter code: Large ribosomal subunit protein uL14 (122 aa).

It belongs to the universal ribosomal protein uL14 family. As to quaternary structure, part of the 50S ribosomal subunit. Forms a cluster with proteins L3 and L19. In the 70S ribosome, L14 and L19 interact and together make contacts with the 16S rRNA in bridges B5 and B8.

Binds to 23S rRNA. Forms part of two intersubunit bridges in the 70S ribosome. This chain is Large ribosomal subunit protein uL14, found in Symbiobacterium thermophilum (strain DSM 24528 / JCM 14929 / IAM 14863 / T).